Here is a 184-residue protein sequence, read N- to C-terminus: NADH-dependent flavin reductase subunit 2 (184 aa).

Belongs to the NADH-dependent flavin reductase family. In terms of assembly, requires LJ_0548 for activity, but the exact composition of the enzyme is unclear.

The catalysed reaction is a reduced flavin + NAD(+) = an oxidized flavin + NADH + 2 H(+). Its function is as follows. Component of an enzyme that catalyzes the reduction of free flavins (FMN, FAD and riboflavin) by NADH; the reduced flavins produced by this reaction likely spontaneously react with oxygen, yielding hydrogen peroxide. Is responsible for the major H(2)O(2) production in L.johnsonii in the presence of oxygen. Cannot use NADPH instead of NADH as the electron donor. This chain is NADH-dependent flavin reductase subunit 2 (nfr2), found in Lactobacillus johnsonii (strain CNCM I-12250 / La1 / NCC 533).